We begin with the raw amino-acid sequence, 145 residues long: D-aminoacyl-tRNA deacylase (145 aa).

Residues 137–138 (GP) carry the Gly-cisPro motif, important for rejection of L-amino acids motif.

Belongs to the DTD family. As to quaternary structure, homodimer.

The protein resides in the cytoplasm. The enzyme catalyses glycyl-tRNA(Ala) + H2O = tRNA(Ala) + glycine + H(+). The catalysed reaction is a D-aminoacyl-tRNA + H2O = a tRNA + a D-alpha-amino acid + H(+). In terms of biological role, an aminoacyl-tRNA editing enzyme that deacylates mischarged D-aminoacyl-tRNAs. Also deacylates mischarged glycyl-tRNA(Ala), protecting cells against glycine mischarging by AlaRS. Acts via tRNA-based rather than protein-based catalysis; rejects L-amino acids rather than detecting D-amino acids in the active site. By recycling D-aminoacyl-tRNA to D-amino acids and free tRNA molecules, this enzyme counteracts the toxicity associated with the formation of D-aminoacyl-tRNA entities in vivo and helps enforce protein L-homochirality. The sequence is that of D-aminoacyl-tRNA deacylase from Chromohalobacter salexigens (strain ATCC BAA-138 / DSM 3043 / CIP 106854 / NCIMB 13768 / 1H11).